We begin with the raw amino-acid sequence, 339 residues long: Trace amine-associated receptor 1 (339 aa).

Over 1–24 (MMPFCHNIINISCVKNNWSNDVRA) the chain is Extracellular. Disulfide bonds link C5/C178, C13/C88, and C96/C182. N10 and N17 each carry an N-linked (GlcNAc...) asparagine glycan. Residues 25–49 (SLYSLMVLIILTTLVGNLIVIVSIS) form a helical membrane-spanning segment. The Cytoplasmic segment spans residues 50–59 (HFKQLHTPTN). A helical transmembrane segment spans residues 60–81 (WLIHSMATVDFLLGCLVMPYSM). Residues 82-96 (VRSAEHCWYFGEVFC) are Extracellular-facing. A helical membrane pass occupies residues 97–119 (KIHTSTDIMLSSASIFHLSFISI). D103 is a 2-phenylethylamine binding site. Residues 120–139 (DRYYAVCDPLRYKAKMNILV) lie on the Cytoplasmic side of the membrane. Residues 140-161 (ICVMIFISWSVPAVFAFGMIFL) traverse the membrane as a helical segment. The Extracellular portion of the chain corresponds to 162–188 (ELNFKGAEEIYYKHVHCRGGCSVFFSK). Positions 175–186 (HVHCRGGCSVFF) are extracellular Loop 2 (ECL2). The helical transmembrane segment at 189–211 (ISGVLTFMTSFYIPGSIMLCVYY) threads the bilayer. The Cytoplasmic segment spans residues 212–249 (RIYLIAKEQARLISDANQKLQIGLEMKNGISQSKERKA). A helical membrane pass occupies residues 250 to 273 (VKTLGIVMGVFLICWCPFFICTVM). Topologically, residues 274 to 286 (DPFLHYIIPPTLN) are extracellular. Residues 287 to 307 (DVLIWFGYLNSTFNPMVYAFF) traverse the membrane as a helical segment. At 308-339 (YPWFRKALKMMLFGKIFQKDSSRCKLFLELSS) the chain is on the cytoplasmic side.

The protein belongs to the G-protein coupled receptor 1 family. In terms of tissue distribution, expressed at low level in both the central and peripheral nervous system. Moderately expressed in stomach. Low levels in amygdala, kidney, and lung, and small intestine. Trace amounts in cerebellum, dorsal root ganglia, hippocampus, hypothalamus, liver, medulla, pancreas, pituitary, pontine reticular formation, prostate, skeletal muscle and spleen.

Its subcellular location is the endomembrane system. The protein resides in the endoplasmic reticulum membrane. It localises to the cell membrane. With respect to regulation, activated by SEP-363856 small molecule: IHCH-7179 acts both as an agonist activator for HTR1A and TAAR1. Intracellular G-protein coupled receptor for trace amines, which recognizes endogenous amine-containing metabolites such as beta-phenylethylamine (beta-PEA), 3-iodothyronamine (T1AM), isoamylamine (IAA), cadaverine (CAD), cyclohexylamine (CHA), p-tyramine (p-TYR), trimethylamine (TMA), octopamine and tryptamine. Also functions as a receptor for various drugs and psychoactive substances, such as amphetamine and methamphetamine. Unresponsive to classical biogenic amines, such as epinephrine and histamine and only partially activated by dopamine and serotonin. Expressed in both the central and peripheral nervous system: TAAR1 activation regulates the activity of several neurotransmitter signaling pathways by (1) decreasing the basal firing rates of the neurons involved and by (2) lowering the sensitivity of receptors to neurotransmitters. Ligand binding causes a conformation change that triggers signaling via guanine nucleotide-binding proteins (G proteins) and modulates the activity of downstream effectors. TAAR1 is coupled with different G(i)/G(o)-, G(s)- or G(q)/G(11) classes of G alpha proteins depending on the ligand. CAD-binding is coupled to G(i)/G(o) G alpha proteins and mediates inhibition of adenylate cyclase activity. T1AM- or beta-PEA-binding is coupled to G(s) G alpha proteins and mediates activation of adenylate cyclase activity. CHA- or IAA-binding is coupled to G(q)/G(11) G alpha proteins and activates phospholipase C-beta, releasing diacylglycerol (DAG) and inositol 1,4,5-trisphosphate (IP3) second messengers. TMA-binding is coupled with all three G(i)/G(o)-, G(s)- or G(q)/G(11) G alpha protein subtypes. Amphetamine-binding is coupled with G(s)- or G(12)/G(13) G alpha protein subtypes. This chain is Trace amine-associated receptor 1, found in Homo sapiens (Human).